Consider the following 148-residue polypeptide: MYLTEQIMDRPKPRTVKELADTLVIPLIDLLIPCKFCNRFLSYFELLNFDHKCLQLIWTEEDLVYGLCSSCAYASAQLEFTHFFQFAVVGKDIETVEGTAIGNICIRCRYCFKLLDLVEKLATCYKFEQFYKVRNSWKGLCRHCGSVE.

Zinc fingers lie at residues 34–71 and 108–144; these read CKFCNRFLSYFELLNFDHKCLQLIWTEEDLVYGLCSSC and CRYCFKLLDLVEKLATCYKFEQFYKVRNSWKGLCRHC.

Belongs to the papillomaviridae E6 protein family. Forms homodimers. Interacts with ubiquitin-protein ligase UBE3A/E6-AP; this interaction stimulates UBE3A ubiquitin activity. Interacts with host BAK1.

It localises to the host cytoplasm. Its subcellular location is the host nucleus. In terms of biological role, plays a major role in the induction and maintenance of cellular transformation. E6 associates with host UBE3A/E6-AP ubiquitin-protein ligase and modulates its activity. Protects host keratinocytes from apoptosis by mediating the degradation of host BAK1. May also inhibit host immune response. The polypeptide is Protein E6 (Human papillomavirus 9).